The sequence spans 1218 residues: Protein STICHEL (1218 aa).

Residues 24–136 (AGRVLRDPGT…SDARNGGDSY (113 aa)) form a disordered region. Polar residues-rich tracts occupy residues 32 to 46 (GTTSSWKSPLDSSRS), 54 to 73 (ASRNGGSSSQFPIRGESSTN), and 86 to 95 (WKTQKSSSEK). Residues 163–180 (RKSNVGSCKKKSKKKISS) carry the Bipartite nuclear localization signal motif. Short sequence motifs (PEST) lie at residues 273-304 (RNPSTVGSWDGTTTSVNDGDDELDDNLDLPGR) and 425-449 (RSQDGLEAVALDGEEEEGSTPETIR). Residue 490–497 (GPRGTGKT) participates in ATP binding. Cys509, Cys518, Cys521, and Cys524 together coordinate Zn(2+). The stretch at 762–788 (EADMEGLKHALKLLSEAEKQLRVSNDR) forms a coiled coil. The interval 802 to 828 (MPSPGTTHTGSSRRQSSRATDDDPASV) is disordered. The segment covering 804-819 (SPGTTHTGSSRRQSSR) has biased composition (polar residues). 2 short sequence motifs (bipartite nuclear localization signal) span residues 1178 to 1195 (RRSKSKQVKGTPVRSRRN) and 1196 to 1213 (RKSRFSLFNGCAKPRKAE).

This sequence belongs to the DnaX/STICHEL family. In terms of assembly, interacts with BLT. Ubiquitous.

It localises to the nucleus. In terms of biological role, acts as a key regulator of trichome branching through an endoreduplication-independent pathway. In Arabidopsis thaliana (Mouse-ear cress), this protein is Protein STICHEL (STI).